A 124-amino-acid chain; its full sequence is Small ribosomal subunit protein uS12 (124 aa).

Residues 1–24 (MPTISQLVRKGRAKITKKSKSAAL) form a disordered region. Basic residues predominate over residues 9–20 (RKGRAKITKKSK). A 3-methylthioaspartic acid modification is found at D89. Residues 105 to 124 (AGVEGRTQRRSKYGAKRPKK) are disordered. Positions 112–124 (QRRSKYGAKRPKK) are enriched in basic residues.

This sequence belongs to the universal ribosomal protein uS12 family. Part of the 30S ribosomal subunit. Contacts proteins S8 and S17. May interact with IF1 in the 30S initiation complex.

With S4 and S5 plays an important role in translational accuracy. In terms of biological role, interacts with and stabilizes bases of the 16S rRNA that are involved in tRNA selection in the A site and with the mRNA backbone. Located at the interface of the 30S and 50S subunits, it traverses the body of the 30S subunit contacting proteins on the other side and probably holding the rRNA structure together. The combined cluster of proteins S8, S12 and S17 appears to hold together the shoulder and platform of the 30S subunit. The protein is Small ribosomal subunit protein uS12 of Christiangramia forsetii (strain DSM 17595 / CGMCC 1.15422 / KT0803) (Gramella forsetii).